We begin with the raw amino-acid sequence, 231 residues long: Flagellar L-ring protein (231 aa).

Residues 1–18 (MNRLLSVFALGGAVLLAG) form the signal peptide. A lipid anchor (N-palmitoyl cysteine) is attached at Cys19. Cys19 carries the S-diacylglycerol cysteine lipid modification.

This sequence belongs to the FlgH family. The basal body constitutes a major portion of the flagellar organelle and consists of four rings (L,P,S, and M) mounted on a central rod.

Its subcellular location is the cell outer membrane. It localises to the bacterial flagellum basal body. Assembles around the rod to form the L-ring and probably protects the motor/basal body from shearing forces during rotation. This Pseudomonas putida (strain GB-1) protein is Flagellar L-ring protein.